Consider the following 223-residue polypeptide: Membrane-associated progesterone receptor component 2 (223 aa).

The segment at 1–33 is disordered; it reads MAAGDGDVKLGTLGSGSESSNDGGSESPGDAGA. Serine 15 carries an O-linked (Xyl...) (chondroitin sulfate) serine glycan. Positions 15–33 are enriched in low complexity; it reads SGSESSNDGGSESPGDAGA. A helical transmembrane segment spans residues 42–66; it reads AAALALLTGGGEMLLNVALVALVLL. Phosphoserine occurs at positions 90, 104, and 208. Residues 102–201 form the Cytochrome b5 heme-binding domain; the sequence is DFSLEQLRQY…EKYDYVGRLL (100 aa). The interval 202–223 is disordered; sequence KPGEEPSEYTDEEDTKDHNKQD. The span at 206 to 215 shows a compositional bias: acidic residues; it reads EPSEYTDEED. Tyrosine 210 carries the post-translational modification Phosphotyrosine. At threonine 211 the chain carries Phosphothreonine.

The protein belongs to the cytochrome b5 family. MAPR subfamily. As to quaternary structure, interacts with PGRMC1. Interacts with AAAS. Expressed by endometrial glands and stroma (at protein level). Detected in urine (at protein level).

It is found in the membrane. The protein localises to the nucleus envelope. It localises to the endoplasmic reticulum. The protein resides in the secreted. Functionally, required for the maintenance of uterine histoarchitecture and normal female reproductive lifespan. May serve as a universal non-classical progesterone receptor in the uterus. Intracellular heme chaperone required for delivery of labile, or signaling heme, to the nucleus. Plays a role in adipocyte function and systemic glucose homeostasis. In brown fat, which has a high demand for heme, delivery of labile heme in the nucleus regulates the activity of heme-responsive transcriptional repressors such as NR1D1 and BACH1. The protein is Membrane-associated progesterone receptor component 2 of Homo sapiens (Human).